The chain runs to 551 residues: Sodium-dependent high-affinity dicarboxylate transporter 2 (551 aa).

The next 10 membrane-spanning stretches (helical) occupy residues 9 to 29 (LIKK…LFFG), 34 to 54 (CLFS…PIGV), 82 to 102 (SIVL…TGLH), 119 to 139 (VMLL…SDTA), 194 to 214 (FCKA…TAII), 243 to 263 (WMVF…IILV), 347 to 367 (VSGV…FDPI), 417 to 437 (IFVG…IVIM), 449 to 469 (IFIP…LYLA), and 497 to 517 (VISM…CILI).

The protein belongs to the SLC13A/DASS transporter (TC 2.A.47) family. NADC subfamily.

The protein resides in the membrane. In terms of biological role, high-affinity sodium-dicarboxylate cotransporter that accepts a range of tricarboxylic acid-cycle intermediates with 4-5 carbon atoms. There is no interaction with monocarboxylates. This Caenorhabditis elegans protein is Sodium-dependent high-affinity dicarboxylate transporter 2 (nac-2).